The sequence spans 720 residues: NAD(P)H-quinone oxidoreductase subunit 5, chloroplastic (720 aa).

Transmembrane regions (helical) follow at residues 9-29 (WIVP…LLFF), 39-59 (IWAI…FNIL), 87-107 (FLID…GVLV), 125-145 (FAYL…PNLI), 147-167 (IYIF…FWFT), 189-209 (LLLG…EILF), 221-239 (VNLY…GPIA), 258-278 (TPIS…FLVA), 286-306 (LLPF…FLGA), 327-347 (LGYM…FHLI), 354-374 (ALLF…VGYS), 395-415 (GITF…ACFW), 434-454 (ISLV…FLTF), 530-550 (LFPL…GAPF), 590-610 (LSVV…FSLF), and 700-720 (LFGL…GAMF).

Belongs to the complex I subunit 5 family. NDH is composed of at least 16 different subunits, 5 of which are encoded in the nucleus.

It localises to the plastid. The protein localises to the chloroplast thylakoid membrane. It catalyses the reaction a plastoquinone + NADH + (n+1) H(+)(in) = a plastoquinol + NAD(+) + n H(+)(out). The catalysed reaction is a plastoquinone + NADPH + (n+1) H(+)(in) = a plastoquinol + NADP(+) + n H(+)(out). In terms of biological role, NDH shuttles electrons from NAD(P)H:plastoquinone, via FMN and iron-sulfur (Fe-S) centers, to quinones in the photosynthetic chain and possibly in a chloroplast respiratory chain. The immediate electron acceptor for the enzyme in this species is believed to be plastoquinone. Couples the redox reaction to proton translocation, and thus conserves the redox energy in a proton gradient. The chain is NAD(P)H-quinone oxidoreductase subunit 5, chloroplastic (ndhF) from Physcomitrium patens (Spreading-leaved earth moss).